The following is a 138-amino-acid chain: Regulator of ribonuclease activity B (138 aa).

Residues 111 to 138 are disordered; it reads WGTYFEDPNGEEGDDDDYVDEDDDGVRH. A compositionally biased stretch (acidic residues) spans 118 to 138; the sequence is PNGEEGDDDDYVDEDDDGVRH.

Belongs to the RraB family. As to quaternary structure, interacts with the C-terminal region of Rne.

It localises to the cytoplasm. Globally modulates RNA abundance by binding to RNase E (Rne) and regulating its endonucleolytic activity. Can modulate Rne action in a substrate-dependent manner by altering the composition of the degradosome. The sequence is that of Regulator of ribonuclease activity B from Salmonella typhi.